Here is a 66-residue protein sequence, read N- to C-terminus: uncharacterized protein (66 aa).

Over residues 1–18 (MSTTSSSSTFSTRTASLS) the composition is skewed to low complexity. The disordered stretch occupies residues 1-22 (MSTTSSSSTFSTRTASLSQSYT).

This is an uncharacterized protein from Schizosaccharomyces pombe (strain 972 / ATCC 24843) (Fission yeast).